A 290-amino-acid polypeptide reads, in one-letter code: UPF0761 membrane protein Ent638_4092 (290 aa).

A run of 6 helical transmembrane segments spans residues 44–64 (LLSLVPLVAVIFALFAAFPMF), 104–124 (VGACGLIVTALLLMYAIDSAL), 140–160 (FAVYWMILTLGPLLAGASLAI), 183–203 (IFPLILSWLAFWLLYSIVPTL), 210–230 (AIVGALVAAILFELGKKGFAL), and 244–264 (VLAVVPILFVWVYWTWCIVLL).

It belongs to the UPF0761 family.

The protein resides in the cell inner membrane. This chain is UPF0761 membrane protein Ent638_4092, found in Enterobacter sp. (strain 638).